The following is a 198-amino-acid chain: Protein C4 (198 aa).

Residues 1 to 36 (MFNPRHPGGEFFGRKHHRRHAPDGRSSSSSSSSSEC) form a disordered region.

This Giardia intestinalis (Giardia lamblia) protein is Protein C4 (C4).